Here is a 352-residue protein sequence, read N- to C-terminus: Desmethylxanthohumol 6'-O-methyltransferase (352 aa).

Asp219 serves as a coordination point for S-adenosyl-L-methionine. The active-site Proton acceptor is His257.

This sequence belongs to the class I-like SAM-binding methyltransferase superfamily. Cation-independent O-methyltransferase family. As to quaternary structure, homodimer. As to expression, highly expressed in lupulin glands. Detected in early-, mid- and late-stage cones.

It is found in the cytoplasm. The enzyme catalyses desmethylxanthohumol + S-adenosyl-L-methionine = xanthohumol + S-adenosyl-L-homocysteine + H(+). It catalyses the reaction xanthogalenol + S-adenosyl-L-methionine = 4'-O-methylxanthohumol + S-adenosyl-L-homocysteine + H(+). It functions in the pathway secondary metabolite biosynthesis. Inhibited by S-adenosyl homocysteine. In terms of biological role, involved in the biosynthesis of prenylated phenolics natural products which contribute to the bitter taste of beer and display broad biological activities. Catalyzes the biosynthesis of xanthohumol. Methylates desmethylxanthohumol and xanthogalenol, but not caffeic acid, prenylflavanones, simple phenols or phenylpropanoids. In Humulus lupulus (European hop), this protein is Desmethylxanthohumol 6'-O-methyltransferase.